The primary structure comprises 51 residues: FVBQHLCGSHLVEALYLVCGERGFFYTPKSGIVDQCCTSICSLYQLENYCN.

Intrachain disulfides connect Cys-7/Cys-37, Cys-19/Cys-50, and Cys-36/Cys-41.

It belongs to the insulin family. In terms of assembly, heterodimer of a B chain and an A chain linked by two disulfide bonds.

The protein resides in the secreted. Insulin decreases blood glucose concentration. It increases cell permeability to monosaccharides, amino acids and fatty acids. It accelerates glycolysis, the pentose phosphate cycle, and glycogen synthesis in liver. The chain is Insulin (INS) from Acomys cahirinus (Cairo spiny mouse).